The primary structure comprises 327 residues: Zinc transport protein ZntB (327 aa).

Topologically, residues 1-273 (MEAIKGSDVN…ARRTYTMSLM (273 aa)) are cytoplasmic. A helical membrane pass occupies residues 274–294 (AMVFLPSTFLTGLFGVNLGGI). Residues 295 to 300 (PGGGWQ) are Periplasmic-facing. A helical membrane pass occupies residues 301-321 (FGFSIFCILLVVLIGGVALWL). Residues 322–327 (HRSKWL) are Cytoplasmic-facing.

It belongs to the CorA metal ion transporter (MIT) (TC 1.A.35) family.

Its subcellular location is the cell inner membrane. It catalyses the reaction Zn(2+)(out) + H(+)(out) = Zn(2+)(in) + H(+)(in). Functionally, zinc transporter. Acts as a Zn(2+):proton symporter, which likely mediates zinc ion uptake. This chain is Zinc transport protein ZntB, found in Escherichia coli O8 (strain IAI1).